The chain runs to 125 residues: uncharacterized protein (125 aa).

In terms of domain architecture, HTH dtxR-type spans 1-63 (MSQSIEDYLE…YEPYIGITLT (63 aa)).

Belongs to the DtxR/MntR family.

This is an uncharacterized protein from Methanocaldococcus jannaschii (strain ATCC 43067 / DSM 2661 / JAL-1 / JCM 10045 / NBRC 100440) (Methanococcus jannaschii).